Here is a 155-residue protein sequence, read N- to C-terminus: Troponin C, isoform 3 (155 aa).

EF-hand domains follow at residues 11–46, 47–82, 87–122, and 123–155; these read EQIA…MGQP, FDKK…FIVE, AMQK…LDDQ, and LTEQ…MTGE. Ca(2+) contacts are provided by Asp-60, Asp-62, Ser-64, Arg-66, and Glu-71. Residues Asp-136, Asp-138, Ser-140, Thr-142, and Glu-147 each coordinate Ca(2+).

It belongs to the troponin C family. Present in both larval and adult muscles.

The polypeptide is Troponin C, isoform 3 (TpnC73F) (Drosophila melanogaster (Fruit fly)).